The primary structure comprises 338 residues: uncharacterized protein (338 aa).

A helical transmembrane segment spans residues 20–40; the sequence is IFFTLTFSLSNLFLAICYLFL.

The protein localises to the membrane. This is an uncharacterized protein from Schizosaccharomyces pombe (strain 972 / ATCC 24843) (Fission yeast).